Consider the following 511-residue polypeptide: Alpha-amylase 1 (511 aa).

Residues 1-15 (MKFFLLLSLIGFCWA) form the signal peptide. The residue at position 16 (Gln-16) is a Pyrrolidone carboxylic acid. Disulfide bonds link Cys-43/Cys-101, Cys-85/Cys-130, and Cys-156/Cys-175. Ca(2+)-binding residues include Asn-115, Arg-173, and Asp-182. Arg-210 provides a ligand contact to chloride. Asp-212 (nucleophile) is an active-site residue. Residue His-216 coordinates Ca(2+). Glu-248 functions as the Proton donor in the catalytic mechanism. Positions 313 and 352 each coordinate chloride. Cystine bridges form between Cys-393–Cys-399 and Cys-465–Cys-477.

This sequence belongs to the glycosyl hydrolase 13 family. As to quaternary structure, monomer. Requires Ca(2+) as cofactor. Chloride serves as cofactor. In terms of tissue distribution, expressed in liver and saliva.

It is found in the secreted. The catalysed reaction is Endohydrolysis of (1-&gt;4)-alpha-D-glucosidic linkages in polysaccharides containing three or more (1-&gt;4)-alpha-linked D-glucose units.. This Mus musculus (Mouse) protein is Alpha-amylase 1 (Amy1).